The following is a 548-amino-acid chain: ATP synthase subunit alpha (548 aa).

172 to 179 (GDRKTGKT) is a binding site for ATP. Residues 526 to 548 (AEAMDEADVEKESVKVRKPAPKK) are disordered.

The protein belongs to the ATPase alpha/beta chains family. In terms of assembly, F-type ATPases have 2 components, CF(1) - the catalytic core - and CF(0) - the membrane proton channel. CF(1) has five subunits: alpha(3), beta(3), gamma(1), delta(1), epsilon(1). CF(0) has three main subunits: a(1), b(2) and c(9-12). The alpha and beta chains form an alternating ring which encloses part of the gamma chain. CF(1) is attached to CF(0) by a central stalk formed by the gamma and epsilon chains, while a peripheral stalk is formed by the delta and b chains.

It localises to the cell membrane. It carries out the reaction ATP + H2O + 4 H(+)(in) = ADP + phosphate + 5 H(+)(out). Functionally, produces ATP from ADP in the presence of a proton gradient across the membrane. The alpha chain is a regulatory subunit. This Mycolicibacterium vanbaalenii (strain DSM 7251 / JCM 13017 / BCRC 16820 / KCTC 9966 / NRRL B-24157 / PYR-1) (Mycobacterium vanbaalenii) protein is ATP synthase subunit alpha.